A 555-amino-acid polypeptide reads, in one-letter code: Putative polyketide hydroxylase (555 aa).

Residues 16-45 (PVLV…LVER) and 303-313 (YRAGRVFLAGD) contribute to the FAD site. A disordered region spans residues 366 to 395 (ATTARAAARSAEHSHPGFAPPPGTSGGPQG).

This sequence belongs to the PheA/TfdB FAD monooxygenase family. It depends on FAD as a cofactor.

In terms of biological role, involved in developmentally regulated synthesis of a compound biosynthetically related to polyketide antibiotics which is essential for spore color in Streptomyces halstedii. The protein is Putative polyketide hydroxylase (schC) of Streptomyces halstedii.